Here is a 626-residue protein sequence, read N- to C-terminus: Glutamate--cysteine ligase (626 aa).

It belongs to the glutamate--cysteine ligase type 3 family. Monomer.

It carries out the reaction L-cysteine + L-glutamate + ATP = gamma-L-glutamyl-L-cysteine + ADP + phosphate + H(+). It participates in sulfur metabolism; glutathione biosynthesis; glutathione from L-cysteine and L-glutamate: step 1/2. Functionally, an essential enzyme in glutathione (L-gamma-glutamyl-L-cysteinylglycine, GSH) biosynthesis, GSH is essential for growth and differentiation to prespore stage. Catalyzes the condensation of glutamate to cysteine. The sequence is that of Glutamate--cysteine ligase (gcsA) from Dictyostelium discoideum (Social amoeba).